We begin with the raw amino-acid sequence, 346 residues long: N-acetyl-gamma-glutamyl-phosphate reductase (346 aa).

C150 is an active-site residue.

This sequence belongs to the NAGSA dehydrogenase family. Type 1 subfamily.

It localises to the cytoplasm. The catalysed reaction is N-acetyl-L-glutamate 5-semialdehyde + phosphate + NADP(+) = N-acetyl-L-glutamyl 5-phosphate + NADPH + H(+). Its pathway is amino-acid biosynthesis; L-arginine biosynthesis; N(2)-acetyl-L-ornithine from L-glutamate: step 3/4. Its function is as follows. Catalyzes the NADPH-dependent reduction of N-acetyl-5-glutamyl phosphate to yield N-acetyl-L-glutamate 5-semialdehyde. The chain is N-acetyl-gamma-glutamyl-phosphate reductase from Moorella thermoacetica (strain ATCC 39073 / JCM 9320).